Here is a 206-residue protein sequence, read N- to C-terminus: Large ribosomal subunit protein uL4 (206 aa).

Belongs to the universal ribosomal protein uL4 family. As to quaternary structure, part of the 50S ribosomal subunit.

Functionally, one of the primary rRNA binding proteins, this protein initially binds near the 5'-end of the 23S rRNA. It is important during the early stages of 50S assembly. It makes multiple contacts with different domains of the 23S rRNA in the assembled 50S subunit and ribosome. Its function is as follows. Forms part of the polypeptide exit tunnel. The sequence is that of Large ribosomal subunit protein uL4 from Nitratidesulfovibrio vulgaris (strain ATCC 29579 / DSM 644 / CCUG 34227 / NCIMB 8303 / VKM B-1760 / Hildenborough) (Desulfovibrio vulgaris).